A 74-amino-acid polypeptide reads, in one-letter code: Protein krueppel (74 aa).

4 consecutive C2H2-type zinc fingers follow at residues 1–4, 10–32, 38–60, and 66–74; these read ERTH, FECS…MRLH, YHCT…LRVH, and YACELCASR.

The protein belongs to the krueppel C2H2-type zinc-finger protein family.

It localises to the nucleus. Functionally, krueppel is a gap class segmentation protein. This chain is Protein krueppel (Kr), found in Euscelis plebejus (Leafhopper).